We begin with the raw amino-acid sequence, 426 residues long: Glutamate-1-semialdehyde 2,1-aminomutase (426 aa).

At Lys-265 the chain carries N6-(pyridoxal phosphate)lysine.

Belongs to the class-III pyridoxal-phosphate-dependent aminotransferase family. HemL subfamily. Homodimer. Requires pyridoxal 5'-phosphate as cofactor.

Its subcellular location is the cytoplasm. It catalyses the reaction (S)-4-amino-5-oxopentanoate = 5-aminolevulinate. The protein operates within porphyrin-containing compound metabolism; protoporphyrin-IX biosynthesis; 5-aminolevulinate from L-glutamyl-tRNA(Glu): step 2/2. This chain is Glutamate-1-semialdehyde 2,1-aminomutase, found in Actinobacillus pleuropneumoniae serotype 3 (strain JL03).